Here is a 44-residue protein sequence, read N- to C-terminus: uncharacterized protein (44 aa).

It is found in the plastid. The protein resides in the chloroplast. This is an uncharacterized protein from Trieres chinensis (Marine centric diatom).